Consider the following 316-residue polypeptide: Ornithine carbamoyltransferase (316 aa).

Residues 57-60, Q84, R108, and 135-138 contribute to the carbamoyl phosphate site; these read STRT and HPCQ. L-ornithine-binding positions include N166, D230, and 234-235; that span reads SM. Carbamoyl phosphate-binding positions include 269-270 and R297; that span reads CL.

This sequence belongs to the aspartate/ornithine carbamoyltransferase superfamily. OTCase family.

It localises to the cytoplasm. It carries out the reaction carbamoyl phosphate + L-ornithine = L-citrulline + phosphate + H(+). It functions in the pathway amino-acid degradation; L-arginine degradation via ADI pathway; carbamoyl phosphate from L-arginine: step 2/2. Reversibly catalyzes the transfer of the carbamoyl group from carbamoyl phosphate (CP) to the N(epsilon) atom of ornithine (ORN) to produce L-citrulline. This chain is Ornithine carbamoyltransferase, found in Bacillus cereus (strain 03BB102).